Reading from the N-terminus, the 318-residue chain is Thymidylate synthase (318 aa).

Residues arginine 25 and 180–181 each bind dUMP; that span reads RR. Catalysis depends on cysteine 200, which acts as the Nucleophile. DUMP is bound by residues 220 to 223, asparagine 231, and 261 to 263; these read RSGD and HIY. Aspartate 223 is a (6R)-5,10-methylene-5,6,7,8-tetrahydrofolate binding site. (6R)-5,10-methylene-5,6,7,8-tetrahydrofolate is bound at residue alanine 317.

This sequence belongs to the thymidylate synthase family. Bacterial-type ThyA subfamily. Homodimer.

It localises to the cytoplasm. It carries out the reaction dUMP + (6R)-5,10-methylene-5,6,7,8-tetrahydrofolate = 7,8-dihydrofolate + dTMP. Its pathway is pyrimidine metabolism; dTTP biosynthesis. Functionally, catalyzes the reductive methylation of 2'-deoxyuridine-5'-monophosphate (dUMP) to 2'-deoxythymidine-5'-monophosphate (dTMP) while utilizing 5,10-methylenetetrahydrofolate (mTHF) as the methyl donor and reductant in the reaction, yielding dihydrofolate (DHF) as a by-product. This enzymatic reaction provides an intracellular de novo source of dTMP, an essential precursor for DNA biosynthesis. This Lactobacillus gasseri (strain ATCC 33323 / DSM 20243 / BCRC 14619 / CIP 102991 / JCM 1131 / KCTC 3163 / NCIMB 11718 / NCTC 13722 / AM63) protein is Thymidylate synthase.